The sequence spans 147 residues: Cytochrome c-type biogenesis protein CcmE (147 aa).

Topologically, residues 1–7 (MTVRQRR) are cytoplasmic. A helical; Signal-anchor for type II membrane protein membrane pass occupies residues 8–28 (FAMVILVVIGVSIATGLGLKA). At 29–147 (FQENILFFYN…KTKANTEDKL (119 aa)) the chain is on the periplasmic side. The heme site is built by His-123 and Tyr-127.

Belongs to the CcmE/CycJ family.

It localises to the cell inner membrane. Heme chaperone required for the biogenesis of c-type cytochromes. Transiently binds heme delivered by CcmC and transfers the heme to apo-cytochromes in a process facilitated by CcmF and CcmH. The chain is Cytochrome c-type biogenesis protein CcmE from Nitrosococcus oceani (strain ATCC 19707 / BCRC 17464 / JCM 30415 / NCIMB 11848 / C-107).